Reading from the N-terminus, the 662-residue chain is Transketolase (662 aa).

Position 28 (His-28) interacts with substrate. Thiamine diphosphate-binding positions include His-68 and 115 to 117; that span reads GPL. Asp-156 contributes to the Mg(2+) binding site. Thiamine diphosphate is bound by residues Gly-157 and Asn-186. Mg(2+) contacts are provided by Asn-186 and Ile-188. Substrate contacts are provided by His-261, Arg-356, and Ser-383. His-261 is a binding site for thiamine diphosphate. Glu-410 (proton donor) is an active-site residue. A thiamine diphosphate-binding site is contributed by Phe-436. Substrate-binding residues include His-460, Asp-468, and Arg-519.

Belongs to the transketolase family. In terms of assembly, homodimer. Mg(2+) serves as cofactor. The cofactor is Ca(2+). It depends on Mn(2+) as a cofactor. Requires Co(2+) as cofactor. Thiamine diphosphate is required as a cofactor.

The catalysed reaction is D-sedoheptulose 7-phosphate + D-glyceraldehyde 3-phosphate = aldehydo-D-ribose 5-phosphate + D-xylulose 5-phosphate. It participates in carbohydrate biosynthesis; Calvin cycle. It functions in the pathway carbohydrate degradation; pentose phosphate pathway. Functionally, catalyzes the transfer of a two-carbon ketol group from a ketose donor to an aldose acceptor, via a covalent intermediate with the cofactor thiamine pyrophosphate. This chain is Transketolase (tkt), found in Staphylococcus aureus (strain COL).